The chain runs to 718 residues: Polyribonucleotide nucleotidyltransferase (718 aa).

Asp-496 and Asp-502 together coordinate Mg(2+). The 60-residue stretch at 563–622 folds into the KH domain; sequence PRLLTIKIDSDMIGLVIGPGGKTIKGITEETGAKIDIEDDGTVTISAVDENKAKRARNII. Positions 632-700 constitute an S1 motif domain; it reads GDVYAGRITR…NKGRINLTRL (69 aa).

Belongs to the polyribonucleotide nucleotidyltransferase family. Mg(2+) serves as cofactor.

It is found in the cytoplasm. The enzyme catalyses RNA(n+1) + phosphate = RNA(n) + a ribonucleoside 5'-diphosphate. Its function is as follows. Involved in mRNA degradation. Catalyzes the phosphorolysis of single-stranded polyribonucleotides processively in the 3'- to 5'-direction. In Nostoc punctiforme (strain ATCC 29133 / PCC 73102), this protein is Polyribonucleotide nucleotidyltransferase.